Consider the following 226-residue polypeptide: MGQKVNPVGFRLGVNRGWDSVWYAKKKDFGNYLIEDFKIRAYIKKNVVNSGVSKVMIERTSNKCFVTIYTSRPGFVIGKKGSDIDKIKNNLSKFTNNEVTLNIKEVKKPETNAYLVAENIAQQLVKRISYRRAMKRAMQSCLRLGAKGIKVSISGRLGGNEIARTEWLREGSIPSHTLRADIDYAEAEALTTFGIIGIKIWIYKGEVFAKEFSQETNKIVPKEVKE.

The region spanning 39-107 (IRAYIKKNVV…EVTLNIKEVK (69 aa)) is the KH type-2 domain.

It belongs to the universal ribosomal protein uS3 family. In terms of assembly, part of the 30S ribosomal subunit. Forms a tight complex with proteins S10 and S14.

In terms of biological role, binds the lower part of the 30S subunit head. Binds mRNA in the 70S ribosome, positioning it for translation. In Pelagibacter ubique (strain HTCC1062), this protein is Small ribosomal subunit protein uS3.